A 339-amino-acid chain; its full sequence is Methionine import ATP-binding protein MetN 2 (339 aa).

One can recognise an ABC transporter domain in the interval 2–241 (ISFNNVSKVY…PKTKTTQNFV (240 aa)). ATP is bound at residue 38 to 45 (GFSGAGKS).

It belongs to the ABC transporter superfamily. Methionine importer (TC 3.A.1.24) family. In terms of assembly, the complex is composed of two ATP-binding proteins (MetN), two transmembrane proteins (MetI) and a solute-binding protein (MetQ).

Its subcellular location is the cell membrane. The catalysed reaction is L-methionine(out) + ATP + H2O = L-methionine(in) + ADP + phosphate + H(+). The enzyme catalyses D-methionine(out) + ATP + H2O = D-methionine(in) + ADP + phosphate + H(+). In terms of biological role, part of the ABC transporter complex MetNIQ involved in methionine import. Responsible for energy coupling to the transport system. In Bacillus cereus (strain ATCC 10987 / NRS 248), this protein is Methionine import ATP-binding protein MetN 2.